Here is a 447-residue protein sequence, read N- to C-terminus: uncharacterized protein (447 aa).

It to E.coli plasmid IncP-alpha RP4 protein TraN.

This is an uncharacterized protein from Haemophilus influenzae (strain ATCC 51907 / DSM 11121 / KW20 / Rd).